We begin with the raw amino-acid sequence, 730 residues long: Dual function macrocyclase-peptidase POPB (730 aa).

Active-site charge relay system residues include Ser577, Asp661, and His698.

This sequence belongs to the peptidase S9A family. As to quaternary structure, monomer. Expressed in the pileus (cap) and lamellae where it colocalizes with amanitin.

The catalysed reaction is Hydrolysis of Pro-|-Xaa &gt;&gt; Ala-|-Xaa in oligopeptides.. Its function is as follows. Dual function macrocyclase-peptidase involved in the biosynthesis of the highly toxic amanitin toxin family of macrocycles. Cleaves peptide bonds on the C-terminal side of prolyl residues. The enzyme first removes 10 residues from the N-terminus of a 35-residue substrate. Conformational trapping of the 25 amino-acid peptide forces the enzyme to release this intermediate rather than proceed to macrocyclization. The enzyme rebinds the 25 amino-acid peptide in a different conformation and catalyzes macrocyclization of the N-terminal eight residues. This is Dual function macrocyclase-peptidase POPB from Amanita bisporigera (Destroying angel).